The primary structure comprises 122 residues: Large ribosomal subunit protein bL12 (122 aa).

The protein belongs to the bacterial ribosomal protein bL12 family. Homodimer. Part of the 50S ribosomal subunit; present in 4 copies per ribosome. Forms part of the ribosomal stalk which helps the ribosome interact with GTP-bound translation factors. Forms a pentameric L10(L12)2(L12)2 complex, where L10 forms an elongated spine to which 2 L12 dimers bind in a sequential fashion.

In terms of biological role, forms part of the ribosomal stalk which helps the ribosome interact with GTP-bound translation factors. Is thus essential for accurate translation. The polypeptide is Large ribosomal subunit protein bL12 (Geobacillus stearothermophilus (Bacillus stearothermophilus)).